Consider the following 270-residue polypeptide: F-actin-capping protein subunit beta (270 aa).

It belongs to the F-actin-capping protein beta subunit family. In terms of assembly, component of the F-actin capping complex, composed of a heterodimer of an alpha and a beta subunit.

The protein resides in the cytoplasm. The protein localises to the cytoskeleton. Functionally, F-actin-capping proteins bind in a Ca(2+)-independent manner to the fast growing ends of actin filaments (barbed end) thereby blocking the exchange of subunits at these ends. Unlike other capping proteins (such as gelsolin and severin), these proteins do not sever actin filaments. The sequence is that of F-actin-capping protein subunit beta (cap-2) from Caenorhabditis elegans.